A 281-amino-acid chain; its full sequence is Ribosomal RNA small subunit methyltransferase A (281 aa).

Residues asparagine 21, leucine 23, glycine 48, glutamate 69, aspartate 92, and asparagine 113 each coordinate S-adenosyl-L-methionine.

It belongs to the class I-like SAM-binding methyltransferase superfamily. rRNA adenine N(6)-methyltransferase family. RsmA subfamily.

The protein resides in the cytoplasm. The enzyme catalyses adenosine(1518)/adenosine(1519) in 16S rRNA + 4 S-adenosyl-L-methionine = N(6)-dimethyladenosine(1518)/N(6)-dimethyladenosine(1519) in 16S rRNA + 4 S-adenosyl-L-homocysteine + 4 H(+). Specifically dimethylates two adjacent adenosines (A1518 and A1519) in the loop of a conserved hairpin near the 3'-end of 16S rRNA in the 30S particle. May play a critical role in biogenesis of 30S subunits. The protein is Ribosomal RNA small subunit methyltransferase A of Ralstonia nicotianae (strain ATCC BAA-1114 / GMI1000) (Ralstonia solanacearum).